Consider the following 150-residue polypeptide: PTTG1IP family member 2 (150 aa).

Positions 1-19 (MCWLRAWSHILLPVFLSVA) are cleaved as a signal peptide. The Extracellular segment spans residues 20–98 (LIQLIFNLSD…SIFWANCNVD (79 aa)). An N-linked (GlcNAc...) asparagine glycan is attached at asparagine 26. A helical transmembrane segment spans residues 99-119 (LFGIVMLILIVILALAFLWYC). Over 120–150 (LAYYFYMQQHMALYARHGQVPVYNWDAPGDW) the chain is Cytoplasmic.

Its subcellular location is the membrane. The chain is PTTG1IP family member 2 from Mus musculus (Mouse).